Reading from the N-terminus, the 448-residue chain is Adenylosuccinate synthetase 1 (448 aa).

GTP is bound by residues 22–28 (GDEGKGK) and 50–52 (GHT). Asp23 (proton acceptor) is an active-site residue. Residues Asp23 and Gly50 each contribute to the Mg(2+) site. IMP is bound by residues 23–26 (DEGK), 48–51 (NAGH), Thr139, Arg153, Gln234, Thr249, and Arg321. His51 (proton donor) is an active-site residue. Substrate is bound at residue 317–323 (SVTGRPR). GTP is bound by residues Arg323, 349–351 (KLD), and 431–433 (STG).

Belongs to the adenylosuccinate synthetase family. In terms of assembly, homodimer. Mg(2+) serves as cofactor.

The protein localises to the cytoplasm. The enzyme catalyses IMP + L-aspartate + GTP = N(6)-(1,2-dicarboxyethyl)-AMP + GDP + phosphate + 2 H(+). The protein operates within purine metabolism; AMP biosynthesis via de novo pathway; AMP from IMP: step 1/2. Functionally, plays an important role in the de novo pathway of purine nucleotide biosynthesis. Catalyzes the first committed step in the biosynthesis of AMP from IMP. The protein is Adenylosuccinate synthetase 1 of Burkholderia lata (strain ATCC 17760 / DSM 23089 / LMG 22485 / NCIMB 9086 / R18194 / 383).